The primary structure comprises 175 residues: Crossover junction endodeoxyribonuclease RuvC (175 aa).

Catalysis depends on residues Asp16, Glu76, and Asp148. Mg(2+) contacts are provided by Asp16, Glu76, and Asp148.

The protein belongs to the RuvC family. As to quaternary structure, homodimer which binds Holliday junction (HJ) DNA. The HJ becomes 2-fold symmetrical on binding to RuvC with unstacked arms; it has a different conformation from HJ DNA in complex with RuvA. In the full resolvosome a probable DNA-RuvA(4)-RuvB(12)-RuvC(2) complex forms which resolves the HJ. Mg(2+) serves as cofactor.

The protein resides in the cytoplasm. The catalysed reaction is Endonucleolytic cleavage at a junction such as a reciprocal single-stranded crossover between two homologous DNA duplexes (Holliday junction).. In terms of biological role, the RuvA-RuvB-RuvC complex processes Holliday junction (HJ) DNA during genetic recombination and DNA repair. Endonuclease that resolves HJ intermediates. Cleaves cruciform DNA by making single-stranded nicks across the HJ at symmetrical positions within the homologous arms, yielding a 5'-phosphate and a 3'-hydroxyl group; requires a central core of homology in the junction. The consensus cleavage sequence is 5'-(A/T)TT(C/G)-3'. Cleavage occurs on the 3'-side of the TT dinucleotide at the point of strand exchange. HJ branch migration catalyzed by RuvA-RuvB allows RuvC to scan DNA until it finds its consensus sequence, where it cleaves and resolves the cruciform DNA. The sequence is that of Crossover junction endodeoxyribonuclease RuvC from Bradyrhizobium diazoefficiens (strain JCM 10833 / BCRC 13528 / IAM 13628 / NBRC 14792 / USDA 110).